Here is a 1129-residue protein sequence, read N- to C-terminus: MSSSRPASSSSSRNRQSSQARVLAQTTLDAELNAEYEESGDSFDYSKLVEAQRDGPPVQQGRSEKVIAYLQHIQKGKLIQTFGCLLALDEKSFNVIAFSENAPEMLTTVSHAVPSVDDPPRLGIGTNVRSLFSDQGATALHKALGFADVSLLNPILVQCKTSGKPFYAIVHRATGCLVVDFEPVKPTEFPATAAGALQSYKLAAKAISKIQSLPGGSMEVLCNTVVKEVFDLTGYDRVMAYKFHEDDHGEVFSEITKPGLEPYLGLHYPATDIPQAARLLFMKNKVRMICDCRARSIKVIEAEALPFDISLCGSALRAPHSCHLQYMENMNSIASLVMAVVVNENEEDDEAESEQPAQQQKKKKLWGLLVCHHESPRYVPFPLRYACEFLAQVFAVHVNREFELEKQLREKNILKMQTMLSDMLFREASPLTIVSGTPNIMDLVKCDGAALLYGGKVWRLRNAPTESQIHDIAFWLSDVHRDSTGLSTDSLHDAGYPGAAALGDMICGMAVAKINSKDILFWFRSHTAAEIRWGGAKNDPSDMDDSRRMHPRLSFKAFLEVVKMKSLPWSDYEMDAIHSLQLILRGTLNDASKPKREASLDNQIGDLKLDGLAELQAVTSEMVRLMETATVPILAVDGNGLVNGWNQKAAELTGLRVDDAIGRHILTLVEDSSVPVVQRMLYLALQGKEEKEVRFEVKTHGPKRDDGPVILVVNACASRDLHDHVVGVCFVAQDMTVHKLVMDKFTRVEGDYKAIIHNPNPLIPPIFGADEFGWCSEWNAAMTKLTGWNRDEVLDKMLLGEVFDSSNASCPLKNRDAFVSLCVLINSALAGEETEKAPFGFFDRSGKYIECLLSANRKENEGGLITGVFCFIHVASHELQHALQVQQASEQTSLKRLKAFSYMRHAINNPLSGMLYSRKALKNTDLNEEQMKQIHVGDNCHHQINKILADLDQDSITEKSSCLDLEMAEFLLQDVVVAAVSQVLITCQGKGIRISCNLPERFMKQSVYGDGVRLQQILSDFLFISVKFSPVGGSVEISSKLTKNSIGENLHLIDLELRIKHQGLGVPAELMAQMFEEDNKEQSEEGLSLLVSRNLLRLMNGDVRHLREAGVSTFIITAELASAPTAMGQ.

The segment covering methionine 1–arginine 21 has biased composition (low complexity). The segment at methionine 1–alanine 24 is disordered. The GAF domain occupies serine 217 to phenylalanine 402. Cysteine 322 is a phytochromobilin binding site. PAS domains follow at residues valine 618–lysine 688 and valine 748–cysteine 822. One can recognise a Histidine kinase domain in the interval tyrosine 902–serine 1122.

The protein belongs to the phytochrome family. As to quaternary structure, homodimer. Contains one covalently linked phytochromobilin chromophore.

Regulatory photoreceptor which exists in two forms that are reversibly interconvertible by light: the Pr form that absorbs maximally in the red region of the spectrum and the Pfr form that absorbs maximally in the far-red region. Photoconversion of Pr to Pfr induces an array of morphogenic responses, whereas reconversion of Pfr to Pr cancels the induction of those responses. Pfr controls the expression of a number of nuclear genes including those encoding the small subunit of ribulose-bisphosphate carboxylase, chlorophyll A/B binding protein, protochlorophyllide reductase, rRNA, etc. It also controls the expression of its own gene(s) in a negative feedback fashion. The chain is Phytochrome A type 3 (PHYA3) from Avena sativa (Oat).